The following is a 155-amino-acid chain: Endoribonuclease YbeY (155 aa).

Residues His120, His124, and His130 each contribute to the Zn(2+) site.

Belongs to the endoribonuclease YbeY family. Zn(2+) is required as a cofactor.

It localises to the cytoplasm. Its function is as follows. Single strand-specific metallo-endoribonuclease involved in late-stage 70S ribosome quality control and in maturation of the 3' terminus of the 16S rRNA. The sequence is that of Endoribonuclease YbeY from Borreliella burgdorferi (strain ATCC 35210 / DSM 4680 / CIP 102532 / B31) (Borrelia burgdorferi).